The chain runs to 167 residues: Signal peptidase complex catalytic subunit SEC11 (167 aa).

Residues 1–9 (MNLRFELQK) lie on the Cytoplasmic side of the membrane. The chain crosses the membrane as a helical; Signal-anchor for type II membrane protein span at residues 10-30 (LLNVCFLFASAYMFWQGLAIA). The Lumenal segment spans residues 31–167 (TNSASPIVVV…LGLSALLGGE (137 aa)). Residues S44, H83, and D109 each act as charge relay system in the active site. N-linked (GlcNAc...) asparagine glycosylation is present at N121. The C-terminal short (CTS) helix stretch occupies residues 153–164 (ALLGMLGLSALL).

This sequence belongs to the peptidase S26B family. Component of the signal peptidase complex (SPC) composed of a catalytic subunit SEC11 and three accessory subunits SPC1, SPC2 and SPC3. The complex induces a local thinning of the ER membrane which is used to measure the length of the signal peptide (SP) h-region of protein substrates. This ensures the selectivity of the complex towards h-regions shorter than 18-20 amino acids. SPC associates with the translocon complex.

Its subcellular location is the endoplasmic reticulum membrane. It catalyses the reaction Cleavage of hydrophobic, N-terminal signal or leader sequences from secreted and periplasmic proteins.. Catalytic component of the signal peptidase complex (SPC) which catalyzes the cleavage of N-terminal signal sequences from nascent proteins as they are translocated into the lumen of the endoplasmic reticulum. Specifically cleaves N-terminal signal peptides that contain a hydrophobic alpha-helix (h-region) shorter than 18-20 amino acids. The sequence is that of Signal peptidase complex catalytic subunit SEC11 (SEC11) from Saccharomyces cerevisiae (strain Lalvin QA23) (Baker's yeast).